A 90-amino-acid polypeptide reads, in one-letter code: Small ribosomal subunit protein uS17 (90 aa).

This sequence belongs to the universal ribosomal protein uS17 family. In terms of assembly, part of the 30S ribosomal subunit.

In terms of biological role, one of the primary rRNA binding proteins, it binds specifically to the 5'-end of 16S ribosomal RNA. This Dehalococcoides mccartyi (strain ATCC BAA-2100 / JCM 16839 / KCTC 5957 / BAV1) protein is Small ribosomal subunit protein uS17.